The sequence spans 250 residues: Kallikrein-9 (250 aa).

Residues 1–15 form the signal peptide; it reads MKLGLLCALLSLLAG. The 227-residue stretch at 23–249 folds into the Peptidase S1 domain; it reads AIGAEECRPN…YLDWIQEIME (227 aa). 6 disulfide bridges follow: cysteine 29–cysteine 164, cysteine 48–cysteine 64, cysteine 136–cysteine 238, cysteine 143–cysteine 210, cysteine 175–cysteine 189, and cysteine 200–cysteine 225. Catalysis depends on charge relay system residues histidine 63 and aspartate 111. 2 N-linked (GlcNAc...) asparagine glycosylation sites follow: asparagine 131 and asparagine 166. Serine 204 acts as the Charge relay system in catalysis. Asparagine 211 carries N-linked (GlcNAc...) asparagine glycosylation.

It belongs to the peptidase S1 family. Kallikrein subfamily. Skin, thymus, trachea, cerebellum and spinal cord.

The protein localises to the secreted. The sequence is that of Kallikrein-9 (KLK9) from Homo sapiens (Human).